Reading from the N-terminus, the 132-residue chain is Small ribosomal subunit protein uS11c (132 aa).

The protein belongs to the universal ribosomal protein uS11 family. In terms of assembly, part of the 30S ribosomal subunit.

It is found in the plastid. The protein localises to the chloroplast. The polypeptide is Small ribosomal subunit protein uS11c (Cryptomeria japonica (Japanese cedar)).